A 122-amino-acid chain; its full sequence is Copper metallothionein 1 (122 aa).

Positions 1–35 (MACNCPPQKNTACCSTSEAQDKCTCQKGNCECKAC) are cys-rich copper-binding 1. The tract at residues 36-50 (PNSTKTSESGGKAST) is spacer B1. Residues 51–72 (CNCGGSGEACTCPPGQCACDKC) are cys-rich copper-binding 2. Residues 73 to 81 (PKKAKSVST) are spacer B2. The segment at 82 to 103 (CGCGGSGAACSCPPGKCACDNC) is cys-rich copper-binding 3. A spacer B3 region spans residues 104–113 (PKQAQEKVSS). Positions 114–122 (CACSGSGAA) are cys-rich copper-binding 4.

This sequence belongs to the metallothionein superfamily.

The protein localises to the cytoplasm. It is found in the cell cortex. Copper metallothionein that protects the cell against copper toxicity by tightly chelating copper ions. Required for antioxidant-mediated growth rescue in the presence of fluconazole. Acts as a critical factors for lung colonization and virulence. The polypeptide is Copper metallothionein 1 (Cryptococcus neoformans var. grubii serotype A (strain H99 / ATCC 208821 / CBS 10515 / FGSC 9487) (Filobasidiella neoformans var. grubii)).